The chain runs to 469 residues: Putative dipeptidase SSP1012 (469 aa).

His84 is a Zn(2+) binding site. Asp86 is a catalytic residue. A Zn(2+)-binding site is contributed by Asp115. The Proton acceptor role is filled by Glu149. Positions 150, 173, and 440 each coordinate Zn(2+).

This sequence belongs to the peptidase M20A family. The cofactor is Zn(2+).

This is Putative dipeptidase SSP1012 from Staphylococcus saprophyticus subsp. saprophyticus (strain ATCC 15305 / DSM 20229 / NCIMB 8711 / NCTC 7292 / S-41).